Consider the following 314-residue polypeptide: Deoxymugineic acid synthase 1-B (314 aa).

Residues 1 to 22 (MGAGDKTAAGMPRIGMGTAVQG) are disordered. Asp44 contacts NADP(+). The active-site Proton donor is Tyr49. His112 contacts substrate. NADP(+) is bound by residues 158 to 159 (AN), Gln180, 258 to 266 (FDEARMREN), and 273 to 281 (ELTEEERRR).

It belongs to the aldo/keto reductase family. Mostly expressed in root tissues, observed in mesocotyl and embryonic roots, seedling roots, crown and seedling leafes, mature bracts, anthers, pistil, caryopsis and embryos.

The enzyme catalyses 2'-deoxymugineate + NAD(+) = 3''-deamino-3''-oxonicotianamine + NADH + H(+). The catalysed reaction is 2'-deoxymugineate + NADP(+) = 3''-deamino-3''-oxonicotianamine + NADPH + H(+). Its pathway is siderophore biosynthesis. Catalyzes the reduction of a 3''-keto intermediate during the biosynthesis of 2'-deoxymugineic acid (DMA) from L-Met. Involved in the formation of phytosiderophores (MAs) belonging to the mugineic acid family and required to acquire iron. In Triticum aestivum (Wheat), this protein is Deoxymugineic acid synthase 1-B.